A 200-amino-acid chain; its full sequence is Glutathione S-transferase 1-1 (200 aa).

Positions 1 to 73 (GSSPCRSVIM…YLVEKYGKTD (73 aa)) constitute a GST N-terminal domain. Residues S2, 43–45 (HTI), and 57–59 (ESR) contribute to the glutathione site. One can recognise a GST C-terminal domain in the interval 79-200 (CPKKRAVINQ…AGCLEFKKYF (122 aa)).

Belongs to the GST superfamily. Theta family. As to quaternary structure, homodimer.

The catalysed reaction is RX + glutathione = an S-substituted glutathione + a halide anion + H(+). It carries out the reaction 1,1,1-trichloro-2,2-bis(4-chlorophenyl)ethane = 1,1-dichloro-2,2-bis(4-chlorophenyl)ethylene + chloride + H(+). Conjugation of reduced glutathione to a wide number of exogenous and endogenous hydrophobic electrophiles. Has DDT dehydrochlorinase activity. This chain is Glutathione S-transferase 1-1 (GstD1), found in Drosophila teissieri (Fruit fly).